Here is a 179-residue protein sequence, read N- to C-terminus: Large ribosomal subunit protein uL5 (179 aa).

Belongs to the universal ribosomal protein uL5 family. As to quaternary structure, part of the 50S ribosomal subunit; part of the 5S rRNA/L5/L18/L25 subcomplex. Contacts the 5S rRNA and the P site tRNA. Forms a bridge to the 30S subunit in the 70S ribosome.

In terms of biological role, this is one of the proteins that bind and probably mediate the attachment of the 5S RNA into the large ribosomal subunit, where it forms part of the central protuberance. In the 70S ribosome it contacts protein S13 of the 30S subunit (bridge B1b), connecting the 2 subunits; this bridge is implicated in subunit movement. Contacts the P site tRNA; the 5S rRNA and some of its associated proteins might help stabilize positioning of ribosome-bound tRNAs. The sequence is that of Large ribosomal subunit protein uL5 from Prochlorococcus marinus (strain MIT 9312).